Consider the following 642-residue polypeptide: Threonine--tRNA ligase (642 aa).

Positions 1 to 61 constitute a TGS domain; that stretch reads MPVITLPDGS…HEDASLSIIT (61 aa). The catalytic stretch occupies residues 243 to 534; it reads DHRKIGKQLD…LIEEYAGRFP (292 aa). Zn(2+) is bound by residues Cys334, His385, and His511.

The protein belongs to the class-II aminoacyl-tRNA synthetase family. As to quaternary structure, homodimer. Zn(2+) is required as a cofactor.

The protein localises to the cytoplasm. It carries out the reaction tRNA(Thr) + L-threonine + ATP = L-threonyl-tRNA(Thr) + AMP + diphosphate + H(+). Its function is as follows. Catalyzes the attachment of threonine to tRNA(Thr) in a two-step reaction: L-threonine is first activated by ATP to form Thr-AMP and then transferred to the acceptor end of tRNA(Thr). Also edits incorrectly charged L-seryl-tRNA(Thr). The protein is Threonine--tRNA ligase of Shewanella amazonensis (strain ATCC BAA-1098 / SB2B).